Consider the following 151-residue polypeptide: Large ribosomal subunit protein bL9 (151 aa).

It belongs to the bacterial ribosomal protein bL9 family.

Binds to the 23S rRNA. This Nitrosococcus oceani (strain ATCC 19707 / BCRC 17464 / JCM 30415 / NCIMB 11848 / C-107) protein is Large ribosomal subunit protein bL9.